Consider the following 416-residue polypeptide: Tyrosine--tRNA ligase (416 aa).

Tyr-41 contributes to the L-tyrosine binding site. Positions 46–55 (ATASSLHAGH) match the 'HIGH' region motif. Residues Tyr-175 and Gln-179 each coordinate L-tyrosine. Residues 235 to 239 (KMGKT) carry the 'KMSKS' region motif. Residue Lys-238 participates in ATP binding. The 68-residue stretch at 349–416 (LPVAKAFVDA…KKKHVLLKPV (68 aa)) folds into the S4 RNA-binding domain.

It belongs to the class-I aminoacyl-tRNA synthetase family. TyrS type 1 subfamily. As to quaternary structure, homodimer.

Its subcellular location is the cytoplasm. The enzyme catalyses tRNA(Tyr) + L-tyrosine + ATP = L-tyrosyl-tRNA(Tyr) + AMP + diphosphate + H(+). Catalyzes the attachment of tyrosine to tRNA(Tyr) in a two-step reaction: tyrosine is first activated by ATP to form Tyr-AMP and then transferred to the acceptor end of tRNA(Tyr). The sequence is that of Tyrosine--tRNA ligase from Xanthobacter autotrophicus (strain ATCC BAA-1158 / Py2).